A 226-amino-acid chain; its full sequence is DNA mismatch repair protein MutH (226 aa).

Belongs to the MutH family.

The protein resides in the cytoplasm. Its function is as follows. Sequence-specific endonuclease that cleaves unmethylated GATC sequences. It is involved in DNA mismatch repair. In Haemophilus ducreyi (strain 35000HP / ATCC 700724), this protein is DNA mismatch repair protein MutH.